A 286-amino-acid chain; its full sequence is 2-hydroxy-6-oxononadienedioate/2-hydroxy-6-oxononatrienedioate hydrolase 2 (286 aa).

The active-site Proton acceptor is the H266.

This sequence belongs to the AB hydrolase superfamily. MhpC family. As to quaternary structure, homodimer.

The enzyme catalyses (2Z,4E)-2-hydroxy-6-oxonona-2,4-dienedioate + H2O = (2Z)-2-hydroxypenta-2,4-dienoate + succinate + H(+). It carries out the reaction (2Z,4E,7E)-2-hydroxy-6-oxonona-2,4,7-trienedioate + H2O = (2Z)-2-hydroxypenta-2,4-dienoate + fumarate + H(+). It functions in the pathway aromatic compound metabolism; 3-phenylpropanoate degradation. In terms of biological role, catalyzes the cleavage of the C5-C6 bond of 2-hydroxy-6-oxononadienedioate and 2-hydroxy-6-oxononatrienedioate, a dienol ring fission product of the bacterial meta-cleavage pathway for degradation of phenylpropionic acid. This chain is 2-hydroxy-6-oxononadienedioate/2-hydroxy-6-oxononatrienedioate hydrolase 2, found in Pseudomonas putida (Arthrobacter siderocapsulatus).